Consider the following 338-residue polypeptide: Heat-inducible transcription repressor HrcA (338 aa).

It belongs to the HrcA family.

Functionally, negative regulator of class I heat shock genes (grpE-dnaK-dnaJ and groELS operons). Prevents heat-shock induction of these operons. This is Heat-inducible transcription repressor HrcA from Thermotoga maritima (strain ATCC 43589 / DSM 3109 / JCM 10099 / NBRC 100826 / MSB8).